The chain runs to 854 residues: V-type proton ATPase 116 kDa subunit a 2 (854 aa).

The Cytoplasmic portion of the chain corresponds to 1-393 (MGSLFRSETM…DAYGVGSYQE (393 aa)). Residues 394-412 (VNPALFTIITFPFLFAVMF) form a helical membrane-spanning segment. Residues 413 to 414 (GD) lie on the Vacuolar side of the membrane. Residues 415–431 (FGHGFVMFLFALLLVLN) traverse the membrane as a helical segment. The Cytoplasmic portion of the chain corresponds to 432–445 (ENHPRLNQSQEIMR). The chain crosses the membrane as a helical span at residues 446–475 (MFFNGRYILLLMGLFSVYTGLIYNDCFSKS). Topologically, residues 476 to 549 (VNLFGSRWNV…ATNRLTFLNS (74 aa)) are vacuolar. A helical membrane pass occupies residues 550–569 (FKMKMSVILGITHMTFGVIL). The Cytoplasmic segment spans residues 570–587 (GIFNHLHFRKKFNICLVS). The helical transmembrane segment at 588 to 608 (IPELLFMLCIFGYLIFMIIYK) threads the bilayer. Residues 609 to 651 (WLVYSAETSRTAPSILIEFISMFLFLASDTGGLYPGQEHVQRL) are Vacuolar-facing. A helical membrane pass occupies residues 652–671 (LLLITVLSVPVLFLGKPLFL). Over 672–739 (LWLHRGRSCF…EILMTQIIHS (68 aa)) the chain is Cytoplasmic. Phosphoserine occurs at positions 695 and 700. A helical transmembrane segment spans residues 740–764 (IEYCLGCISNTASYLRLWALSLAHA). Over 765-785 (QLSEVLWAMLMHVGLRVDTAY) the chain is Vacuolar. Residues 786–824 (GVLVLLPVIAFFAVLTIFILLIMEGLSAFLHAIRLHWVE) traverse the membrane as a helical segment. Residues 825–854 (FQNKFYVGAGTKFVPFSFRLLSSKFSDDLA) lie on the Cytoplasmic side of the membrane.

This sequence belongs to the V-ATPase 116 kDa subunit family. In terms of assembly, V-ATPase is a heteromultimeric enzyme made up of two complexes: the ATP-hydrolytic V1 complex and the proton translocation V0 complex. The V1 complex consists of three catalytic AB heterodimers that form a heterohexamer, three peripheral stalks each consisting of EG heterodimers, one central rotor including subunits D and F, and the regulatory subunits C and H. The proton translocation complex V0 consists of the proton transport subunit a, a ring of proteolipid subunits c9c'', rotary subunit d, subunits e and f, and the accessory subunits ATP6AP1/Ac45 and ATP6AP2/PRR. Directly interacts with PSCD2 through its N-terminal cytosolic tail in an intra-endosomal acidification-dependent manner. Disruption of this interaction results in the inhibition of endocytosis. Interacts with SPAAR. In terms of tissue distribution, highly expressed in lung, kidney and spleen.

Its subcellular location is the cell membrane. It is found in the endosome membrane. Functionally, subunit of the V0 complex of vacuolar(H+)-ATPase (V-ATPase), a multisubunit enzyme composed of a peripheral complex (V1) that hydrolyzes ATP and a membrane integral complex (V0) that translocates protons. V-ATPase is responsible for acidifying and maintaining the pH of intracellular compartments and in some cell types, is targeted to the plasma membrane, where it is responsible for acidifying the extracellular environment. Essential component of the endosomal pH-sensing machinery. May play a role in maintaining the Golgi functions, such as glycosylation maturation, by controlling the Golgi pH. In aerobic conditions, involved in intracellular iron homeostasis, thus triggering the activity of Fe(2+) prolyl hydroxylase (PHD) enzymes, and leading to HIF1A hydroxylation and subsequent proteasomal degradation. In Bos taurus (Bovine), this protein is V-type proton ATPase 116 kDa subunit a 2 (ATP6V0A2).